Consider the following 614-residue polypeptide: Heat shock protein SSB1 (614 aa).

Positions 1 to 392 are nucleotide binding domain (NBD); the sequence is MSTEVYDGAI…ILSGKATSAE (392 aa). Residues 16–18, lysine 74, 206–208, 272–279, and glycine 343 each bind ATP; these read TTY, GGT, and ERAKRTLS. The segment at 393–403 is inter-domain linker; that stretch reads TADLLLLDVVP. A substrate binding domain (SBD) region spans residues 404 to 614; it reads LSLGVAMEGN…RAVTKAMSSR (211 aa). The lid domain (SBDalpha) stretch occupies residues 517-613; it reads TSEIENMISE…KRAVTKAMSS (97 aa). A Nuclear export signal motif is present at residues 575-583; it reads IENTMSEAM.

This sequence belongs to the heat shock protein 70 family. Interacts with HAT1 in starvation conditions.

It localises to the nucleus. The protein resides in the cytoplasm. The enzyme catalyses ATP + H2O = ADP + phosphate + H(+). Its function is as follows. Chaperone that interacts with the histone acetyltransferase HAT1 and mediates its translocation from the nucleus to the cytoplasm during germination and starvation conditions. Within the cytoplasm, HAT1 regulates autophagy via acetylation of the autophagy-related proteins ATG3 and ATG9. This chain is Heat shock protein SSB1, found in Pyricularia oryzae (strain 70-15 / ATCC MYA-4617 / FGSC 8958) (Rice blast fungus).